A 179-amino-acid polypeptide reads, in one-letter code: ATP synthase subunit delta (179 aa).

This sequence belongs to the ATPase delta chain family. F-type ATPases have 2 components, F(1) - the catalytic core - and F(0) - the membrane proton channel. F(1) has five subunits: alpha(3), beta(3), gamma(1), delta(1), epsilon(1). F(0) has three main subunits: a(1), b(2) and c(10-14). The alpha and beta chains form an alternating ring which encloses part of the gamma chain. F(1) is attached to F(0) by a central stalk formed by the gamma and epsilon chains, while a peripheral stalk is formed by the delta and b chains.

It localises to the cell membrane. F(1)F(0) ATP synthase produces ATP from ADP in the presence of a proton or sodium gradient. F-type ATPases consist of two structural domains, F(1) containing the extramembraneous catalytic core and F(0) containing the membrane proton channel, linked together by a central stalk and a peripheral stalk. During catalysis, ATP synthesis in the catalytic domain of F(1) is coupled via a rotary mechanism of the central stalk subunits to proton translocation. Its function is as follows. This protein is part of the stalk that links CF(0) to CF(1). It either transmits conformational changes from CF(0) to CF(1) or is implicated in proton conduction. This is ATP synthase subunit delta from Ureaplasma urealyticum serovar 10 (strain ATCC 33699 / Western).